Reading from the N-terminus, the 473-residue chain is ATP synthase subunit beta (473 aa).

158–165 (GGAGVGKT) contributes to the ATP binding site.

It belongs to the ATPase alpha/beta chains family. F-type ATPases have 2 components, CF(1) - the catalytic core - and CF(0) - the membrane proton channel. CF(1) has five subunits: alpha(3), beta(3), gamma(1), delta(1), epsilon(1). CF(0) has three main subunits: a(1), b(2) and c(9-12). The alpha and beta chains form an alternating ring which encloses part of the gamma chain. CF(1) is attached to CF(0) by a central stalk formed by the gamma and epsilon chains, while a peripheral stalk is formed by the delta and b chains.

It localises to the cell membrane. The enzyme catalyses ATP + H2O + 4 H(+)(in) = ADP + phosphate + 5 H(+)(out). Its function is as follows. Produces ATP from ADP in the presence of a proton gradient across the membrane. The catalytic sites are hosted primarily by the beta subunits. The sequence is that of ATP synthase subunit beta from Anoxybacillus flavithermus (strain DSM 21510 / WK1).